A 260-amino-acid polypeptide reads, in one-letter code: Aspartate/glutamate leucyltransferase (260 aa).

The protein belongs to the R-transferase family. Bpt subfamily.

Its subcellular location is the cytoplasm. It catalyses the reaction N-terminal L-glutamyl-[protein] + L-leucyl-tRNA(Leu) = N-terminal L-leucyl-L-glutamyl-[protein] + tRNA(Leu) + H(+). The catalysed reaction is N-terminal L-aspartyl-[protein] + L-leucyl-tRNA(Leu) = N-terminal L-leucyl-L-aspartyl-[protein] + tRNA(Leu) + H(+). Its function is as follows. Functions in the N-end rule pathway of protein degradation where it conjugates Leu from its aminoacyl-tRNA to the N-termini of proteins containing an N-terminal aspartate or glutamate. This chain is Aspartate/glutamate leucyltransferase, found in Sphingomonas elodea.